A 351-amino-acid chain; its full sequence is Anthranilate phosphoribosyltransferase (351 aa).

5-phospho-alpha-D-ribose 1-diphosphate is bound by residues Gly84, 87–88 (GD), 95–98 (NISS), 113–121 (KHGNRGASS), and Ala125. Anthranilate is bound at residue Gly84. Ser97 serves as a coordination point for Mg(2+). Position 116 (Asn116) interacts with anthranilate. Arg171 is a binding site for anthranilate. The Mg(2+) site is built by Asp229 and Lys230.

It belongs to the anthranilate phosphoribosyltransferase family. As to quaternary structure, homodimer. It depends on Mg(2+) as a cofactor.

It catalyses the reaction N-(5-phospho-beta-D-ribosyl)anthranilate + diphosphate = 5-phospho-alpha-D-ribose 1-diphosphate + anthranilate. It functions in the pathway amino-acid biosynthesis; L-tryptophan biosynthesis; L-tryptophan from chorismate: step 2/5. In terms of biological role, catalyzes the transfer of the phosphoribosyl group of 5-phosphorylribose-1-pyrophosphate (PRPP) to anthranilate to yield N-(5'-phosphoribosyl)-anthranilate (PRA). This is Anthranilate phosphoribosyltransferase from Clavibacter sepedonicus (Clavibacter michiganensis subsp. sepedonicus).